Consider the following 239-residue polypeptide: uncharacterized protein (239 aa).

An S4 RNA-binding domain is found at 1 to 65 (MRLDKLLANS…DYREFIYLMM (65 aa)). Residue Asp-103 is the Nucleophile of the active site.

This sequence belongs to the pseudouridine synthase RsuA family.

It carries out the reaction a uridine in RNA = a pseudouridine in RNA. This is an uncharacterized protein from Bacillus subtilis (strain 168).